An 82-amino-acid chain; its full sequence is UPF0154 protein SPD_1662 (82 aa).

The chain crosses the membrane as a helical span at residues leucine 5–valine 25.

It belongs to the UPF0154 family.

It is found in the cell membrane. This is UPF0154 protein SPD_1662 from Streptococcus pneumoniae serotype 2 (strain D39 / NCTC 7466).